Consider the following 97-residue polypeptide: Sperm-associated acrosin inhibitor (97 aa).

The signal sequence occupies residues 1-26 (MAFFSSRVRALFILVLVLPLCSETGF). Positions 32–90 (TRKEPDCDVYRSHLFFCTREMDPICGTNGKSYANPCIFCSEKLGRNEKFDFGHWGHCRE) constitute a Kazal-like domain. Intrachain disulfides connect C38/C70, C48/C67, and C56/C88.

In terms of tissue distribution, seminal plasma.

The protein localises to the secreted. Functionally, inhibits acrosin. The protein is Sperm-associated acrosin inhibitor of Sus scrofa (Pig).